A 464-amino-acid chain; its full sequence is Argininosuccinate lyase (464 aa).

This sequence belongs to the lyase 1 family. Argininosuccinate lyase subfamily.

Its subcellular location is the cytoplasm. It catalyses the reaction 2-(N(omega)-L-arginino)succinate = fumarate + L-arginine. It functions in the pathway amino-acid biosynthesis; L-arginine biosynthesis; L-arginine from L-ornithine and carbamoyl phosphate: step 3/3. The polypeptide is Argininosuccinate lyase (Sulfurovum sp. (strain NBC37-1)).